Reading from the N-terminus, the 154-residue chain is Small ribosomal subunit protein uS15 (154 aa).

Residues 1-10 (MARMHSRRRG) are compositionally biased toward basic residues. The segment at 1-32 (MARMHSRRRGSSGSDRPTADEPPEWSEVDEDA) is disordered. The segment covering 21–32 (EPPEWSEVDEDA) has biased composition (acidic residues).

It belongs to the universal ribosomal protein uS15 family. Part of the 30S ribosomal subunit.

This is Small ribosomal subunit protein uS15 from Natronomonas pharaonis (strain ATCC 35678 / DSM 2160 / CIP 103997 / JCM 8858 / NBRC 14720 / NCIMB 2260 / Gabara) (Halobacterium pharaonis).